Here is a 215-residue protein sequence, read N- to C-terminus: Pentapeptide repeat protein QnrB4 (215 aa).

Pentapeptide repeat domains follow at residues 25-104 and 117-191; these read TFFN…SFMN and ITNT…RGVD.

The protein belongs to the pentapeptide repeat protein family.

Probably plays a role in resistance to quinolone antibiotics. Only inhibits ATP-dependent DNA supercoiling by E.coli gyrase at high concentration (30 uM). Protects E.coli gyrase supercoiling activity from inhibition by fluoroquinolones (ciprofloxacin) at 0.1 uM, does not protect M.tuberculosis gyrase activity. The chain is Pentapeptide repeat protein QnrB4 from Escherichia coli.